We begin with the raw amino-acid sequence, 352 residues long: Dead end protein homolog 1 (352 aa).

RRM domains are found at residues 58–136 (SEVY…RSTE) and 138–218 (CELT…WLKP). An Omega-N-methylarginine modification is found at arginine 336.

Interacts with APOBEC3. As to expression, isoform 1 and isoform 2 are expressed in testis. Isoform 1 is expressed continuously in post natal (PN) testis although levels are low between PN1 to PN6. Isoform 2 is expressed from PN 20 onwards. Isoform 2 is strongly expressed in meiotic and in post-meiotic germ cells of the testis with highest expression at the elongated spermatid stage (at protein level). Expressed in testis and heart. Expressed in germ cells and genital ridges. Not detected in testicular tumors.

The protein resides in the nucleus. It is found in the cytoplasm. Its function is as follows. RNA-binding factor that positively regulates gene expression by prohibiting miRNA-mediated gene suppression. Relieves miRNA repression in germline cells. Prohibits the function of several miRNAs by blocking the accessibility of target mRNAs. Sequence-specific RNA-binding factor that binds specifically to U-rich regions (URRs) in the 3' untranslated region (3'-UTR) of several mRNAs. Does not bind to miRNAs. Isoform 1 may play a role during primordial germ cell (PGC) survival. However, does not seem to be essential for PGC migration. The polypeptide is Dead end protein homolog 1 (Dnd1) (Mus musculus (Mouse)).